The sequence spans 330 residues: Replication factor C small subunit (330 aa).

48–55 contacts ATP; sequence GPPGTGKT.

It belongs to the activator 1 small subunits family. RfcS subfamily. As to quaternary structure, heteropentamer composed of four small subunits (RfcS) and one large subunit (RfcL). A homotetramer of this subunit interacts with PCNA heterodimer PCNA1-PCNA2.

In terms of biological role, part of the RFC clamp loader complex which loads the PCNA sliding clamp onto DNA. The complex possesses DNA-dependent ATPase activity. The sequence is that of Replication factor C small subunit (rfcS) from Saccharolobus solfataricus (strain ATCC 35092 / DSM 1617 / JCM 11322 / P2) (Sulfolobus solfataricus).